A 236-amino-acid polypeptide reads, in one-letter code: MATITTWFTLGLLGELLGTAVLAYGYTLVPEETRKRYLLLIAIPGIAIVAYALMALGFGSIQSEGHAVYVVRYVDWLLTTPLNVWFLALLAGASREDTVKLVVLQALTIVFGFAGAVTPSPVSYALFAVGGALFGGVIYLLYRNIAVAAKSTLSDIEVSLYRTLRNFVVVLWLVYPVVWLLGAAGVGLMDVETATLVVVYLDVVTKVGFGVIALLAMIDLGSAGETAEEPTAVAGD.

7 consecutive transmembrane segments (helical) span residues 4–24 (ITTW…VLAY), 38–58 (LLLI…ALGF), 73–93 (YVDW…LAGA), 101–121 (LVVL…TPSP), 122–142 (VSYA…YLLY), 167–187 (FVVV…AGVG), and 196–216 (LVVV…ALLA). Position 206 is an N6-(retinylidene)lysine (Lys206).

Belongs to the archaeal/bacterial/fungal opsin family. The covalent binding of retinal to the apoprotein, bacterioopsin, generates bacteriorhodopsin.

It localises to the membrane. Functionally, mediates the photorepellent response. The protein is Sensory rhodopsin II (sop2) of Haloarcula marismortui (strain ATCC 43049 / DSM 3752 / JCM 8966 / VKM B-1809) (Halobacterium marismortui).